Here is a 340-residue protein sequence, read N- to C-terminus: MLILGIETSCDDTGAAIYDLEKGLIIHKVISQNNIHSKYGGVVPEKSSKYHLKNIQPLVENIFKNSNISLSKIDGIAYTAGPGLVGSLIIGATFACSLAYTLQIPSIAINHLEGHLLTPMIKYKRPKFPFLGLIISGAHTQFVLAEDIGKYKIIGDCLDDALGEAFDKVAKLLGIKYPGGKKLSIIAKQGNSKRFFFPRPMTKKPGINFSFSGLKTYAKNLVSSFSKIDNQTKCDIARAFEDSIIDTVIIKCKRALDITNSKILLISGGVSANEPLRKNLRNLMKSRNGKLFFSKKSLCTDNAAMIAYVGSIRFKKNKTKDLSVLINPKWSLEDISRLEN.

The Fe cation site is built by His111 and His115. Residues 134-138 (IISGA), Asp167, Gly180, and Asn273 contribute to the substrate site. Asp301 provides a ligand contact to Fe cation.

Belongs to the KAE1 / TsaD family. The cofactor is Fe(2+).

It is found in the cytoplasm. It catalyses the reaction L-threonylcarbamoyladenylate + adenosine(37) in tRNA = N(6)-L-threonylcarbamoyladenosine(37) in tRNA + AMP + H(+). In terms of biological role, required for the formation of a threonylcarbamoyl group on adenosine at position 37 (t(6)A37) in tRNAs that read codons beginning with adenine. Is involved in the transfer of the threonylcarbamoyl moiety of threonylcarbamoyl-AMP (TC-AMP) to the N6 group of A37, together with TsaE and TsaB. TsaD likely plays a direct catalytic role in this reaction. In Wigglesworthia glossinidia brevipalpis, this protein is tRNA N6-adenosine threonylcarbamoyltransferase.